The chain runs to 394 residues: 4-hydroxyphenylpyruvate dioxygenase (394 aa).

2 VOC domains span residues 27-161 (GYDH…LIER) and 193-351 (HIDH…LFTK). The Fe cation site is built by histidine 196, histidine 279, and glutamate 362.

The protein belongs to the 4HPPD family. Fe cation serves as cofactor.

It carries out the reaction 3-(4-hydroxyphenyl)pyruvate + O2 = homogentisate + CO2. Its pathway is amino-acid degradation; L-phenylalanine degradation; acetoacetate and fumarate from L-phenylalanine: step 3/6. In Yarrowia lipolytica (strain CLIB 122 / E 150) (Yeast), this protein is 4-hydroxyphenylpyruvate dioxygenase.